The following is a 610-amino-acid chain: DNA mismatch repair protein MutL (610 aa).

Residues 351-406 (GQRPQAPWSAETSPSRPYQPAPAFSERPQASFDGLSTPTARAEPQFSPDPVSPGLA) form a disordered region.

Belongs to the DNA mismatch repair MutL/HexB family.

In terms of biological role, this protein is involved in the repair of mismatches in DNA. It is required for dam-dependent methyl-directed DNA mismatch repair. May act as a 'molecular matchmaker', a protein that promotes the formation of a stable complex between two or more DNA-binding proteins in an ATP-dependent manner without itself being part of a final effector complex. This Rhizobium etli (strain ATCC 51251 / DSM 11541 / JCM 21823 / NBRC 15573 / CFN 42) protein is DNA mismatch repair protein MutL.